The following is a 199-amino-acid chain: Phosphatidylethanolamine N-methyltransferase (199 aa).

At serine 2–glutamate 12 the chain is on the lumenal side. The helical intramembrane region spans proline 13–alanine 33. At arginine 34–alanine 45 the chain is on the lumenal side. The chain crosses the membrane as a helical span at residues phenylalanine 46 to leucine 66. Residues arginine 67–glycine 93 are Cytoplasmic-facing. A helical transmembrane segment spans residues leucine 94 to threonine 114. An S-adenosyl-L-methionine-binding site is contributed by glycine 98–glycine 100. The Lumenal portion of the chain corresponds to glycine 115–histidine 157. A helical membrane pass occupies residues alanine 158–leucine 178. Topologically, residues phenylalanine 179–serine 199 are cytoplasmic. Glutamate 180–glutamate 181 lines the S-adenosyl-L-methionine pocket.

This sequence belongs to the class VI-like SAM-binding methyltransferase superfamily. PEMT/PEM2 methyltransferase family. As to expression, expressed in liver (at protein level).

The protein localises to the endoplasmic reticulum membrane. The protein resides in the mitochondrion membrane. It catalyses the reaction a 1,2-diacyl-sn-glycero-3-phosphoethanolamine + S-adenosyl-L-methionine = a 1,2-diacyl-sn-glycero-3-phospho-N-methylethanolamine + S-adenosyl-L-homocysteine + H(+). It carries out the reaction a 1,2-diacyl-sn-glycero-3-phospho-N-methylethanolamine + S-adenosyl-L-methionine = a 1,2-diacyl-sn-glycero-3-phospho-N,N-dimethylethanolamine + S-adenosyl-L-homocysteine + H(+). The catalysed reaction is a 1,2-diacyl-sn-glycero-3-phospho-N,N-dimethylethanolamine + S-adenosyl-L-methionine = a 1,2-diacyl-sn-glycero-3-phosphocholine + S-adenosyl-L-homocysteine + H(+). The enzyme catalyses 1,2-di-(9Z-octadecenoyl)-sn-glycero-3-phosphoethanolamine + S-adenosyl-L-methionine = 1,2-di-(9Z-octadecenoyl)-sn-glycero-3-phospho-N-methylethanolamine + S-adenosyl-L-homocysteine + H(+). It catalyses the reaction 1,2-di-(9Z-octadecenoyl)-sn-glycero-3-phospho-N-methylethanolamine + S-adenosyl-L-methionine = 1,2-di-(9Z-octadecenoyl)-sn-glycero-3-phospho-N,N-dimethylethanolamine + S-adenosyl-L-homocysteine + H(+). It carries out the reaction 1,2-di-(9Z-octadecenoyl)-sn-glycero-3-phospho-N,N-dimethylethanolamine + S-adenosyl-L-methionine = 1,2-di-(9Z-octadecenoyl)-sn-glycero-3-phosphocholine + S-adenosyl-L-homocysteine + H(+). The catalysed reaction is 1,2-di-(9Z,12Z-octadecadienoyl)-sn-glycero-3-phosphoethanolamine + S-adenosyl-L-methionine = 1,2-di-(9Z,12Z-octadecadienoyl)-sn-glycero-3-phospho-N-methylethanolamine + S-adenosyl-L-homocysteine + H(+). The enzyme catalyses 1,2-di-(9Z,12Z-octadecadienoyl)-sn-glycero-3-phospho-N-methylethanolamine + S-adenosyl-L-methionine = 1,2-di-(9Z,12Z-octadecadienoyl)-sn-glycero-3-phospho-N,N-dimethylethanolamine + S-adenosyl-L-homocysteine + H(+). It catalyses the reaction 1,2-di-(9Z,12Z-octadecadienoyl)-sn-glycero-3-phospho-N,N-dimethylethanolamine + S-adenosyl-L-methionine = 1,2-di-(9Z,12Z-octadecadienoyl)-sn-glycero-3-phosphocholine + S-adenosyl-L-homocysteine + H(+). It carries out the reaction 1,2-di-(9Z,12Z,15Z-octadecatrienoyl)-sn-glycero-3-phosphoethanolamine + S-adenosyl-L-methionine = 1,2-di-(9Z,12Z,15Z-octadecatrienoyl)-sn-glycero-3-phospho-N-methylethanolamine + S-adenosyl-L-homocysteine + H(+). The catalysed reaction is 1,2-di-(9Z,12Z,15Z-octadecatrienoyl)-sn-glycero-3-phospho-N-methylethanolamine + S-adenosyl-L-methionine = 1,2-di-(9Z,12Z,15Z-octadecatrienoyl)-sn-glycero-3-phospho-N,N-dimethylethanolamine + S-adenosyl-L-homocysteine + H(+). The enzyme catalyses 1,2-di-(9Z,12Z,15Z-octadecatrienoyl)-sn-glycero-3-phospho-N,N-dimethylethanolamine + S-adenosyl-L-methionine = 1,2-di-(9Z,12Z,15Z-octadecatrienoyl)-sn-glycero-3-phosphocholine + S-adenosyl-L-homocysteine + H(+). It catalyses the reaction 1-hexadecanoyl-2-(4Z,7Z,10Z,13Z,16Z,19Z-docosahexaenoyl)-sn-glycero-3-phosphoethanolamine + S-adenosyl-L-methionine = 1-hexadecanoyl-2-(4Z,7Z,10Z,13Z,16Z,19Z-docosahexaenoyl)-sn-glycero-3-phospho-N-methylethanolamine + S-adenosyl-L-homocysteine + H(+). It carries out the reaction 1-hexadecanoyl-2-(4Z,7Z,10Z,13Z,16Z,19Z-docosahexaenoyl)-sn-glycero-3-phospho-N-methylethanolamine + S-adenosyl-L-methionine = 1-hexadecanoyl-2-(4Z,7Z,10Z,13Z,16Z,19Z-docosahexaenoyl)-sn-glycero-3-phospho-N,N-dimethylethanolamine + S-adenosyl-L-homocysteine + H(+). The catalysed reaction is 1-hexadecanoyl-2-(4Z,7Z,10Z,13Z,16Z,19Z-docosahexaenoyl)-sn-glycero-3-phospho-N,N-dimethylethanolamine + S-adenosyl-L-methionine = 1-hexadecanoyl-2-(4Z,7Z,10Z,13Z,16Z,19Z-docosahexaenoyl)-sn-glycero-3-phosphocholine + S-adenosyl-L-homocysteine + H(+). Its pathway is phospholipid metabolism; phosphatidylcholine biosynthesis. Functionally, catalyzes the three sequential steps of the methylation pathway for the biosynthesis of phosphatidylcholine, a critical and essential component for membrane structure. Uses S-adenosylmethionine (S-adenosyl-L-methionine, SAM or AdoMet) as the methyl group donor for the methylation of phosphatidylethanolamine (1,2-diacyl-sn-glycero-3-phosphoethanolamine, PE) to phosphatidylmonomethylethanolamine (1,2-diacyl-sn-glycero-3-phospho-N-methylethanolamine, PMME), PMME to phosphatidyldimethylethanolamine (1,2-diacyl-sn-glycero-3-phospho-N,N-dimethylethanolamine, PDME), and PDME to phosphatidylcholine (1,2-diacyl-sn-glycero-3-phosphocholine, PC), producing S-adenosyl-L-homocysteine in each step. The chain is Phosphatidylethanolamine N-methyltransferase from Rattus norvegicus (Rat).